A 57-amino-acid polypeptide reads, in one-letter code: UPF0391 membrane protein XC_2938 (57 aa).

Helical transmembrane passes span 4–24 and 33–53; these read WAII…GGMA and FLFW…MTIA.

Belongs to the UPF0391 family.

The protein resides in the cell membrane. The chain is UPF0391 membrane protein XC_2938 from Xanthomonas campestris pv. campestris (strain 8004).